The following is a 492-amino-acid chain: UDP-N-acetylmuramoyl-L-alanyl-D-glutamate--2,6-diaminopimelate ligase (492 aa).

Ser-21 contributes to the UDP-N-acetyl-alpha-D-muramoyl-L-alanyl-D-glutamate binding site. 98 to 104 contributes to the ATP binding site; it reads GTNGKSS. UDP-N-acetyl-alpha-D-muramoyl-L-alanyl-D-glutamate is bound by residues 144-145, Ser-171, Gln-177, and Arg-179; that span reads TT. Residue Lys-211 is modified to N6-carboxylysine. Residues Arg-372, 396-399, Gly-446, and Glu-450 contribute to the meso-2,6-diaminopimelate site; that span reads DNPR. Positions 396–399 match the Meso-diaminopimelate recognition motif motif; that stretch reads DNPR.

It belongs to the MurCDEF family. MurE subfamily. Mg(2+) serves as cofactor. In terms of processing, carboxylation is probably crucial for Mg(2+) binding and, consequently, for the gamma-phosphate positioning of ATP.

Its subcellular location is the cytoplasm. The catalysed reaction is UDP-N-acetyl-alpha-D-muramoyl-L-alanyl-D-glutamate + meso-2,6-diaminopimelate + ATP = UDP-N-acetyl-alpha-D-muramoyl-L-alanyl-gamma-D-glutamyl-meso-2,6-diaminopimelate + ADP + phosphate + H(+). The protein operates within cell wall biogenesis; peptidoglycan biosynthesis. Functionally, catalyzes the addition of meso-diaminopimelic acid to the nucleotide precursor UDP-N-acetylmuramoyl-L-alanyl-D-glutamate (UMAG) in the biosynthesis of bacterial cell-wall peptidoglycan. This chain is UDP-N-acetylmuramoyl-L-alanyl-D-glutamate--2,6-diaminopimelate ligase, found in Rickettsia typhi (strain ATCC VR-144 / Wilmington).